A 458-amino-acid chain; its full sequence is UDP-N-acetylmuramate--L-alanine ligase (458 aa).

119 to 125 (GTHGKTT) provides a ligand contact to ATP.

It belongs to the MurCDEF family.

Its subcellular location is the cytoplasm. It catalyses the reaction UDP-N-acetyl-alpha-D-muramate + L-alanine + ATP = UDP-N-acetyl-alpha-D-muramoyl-L-alanine + ADP + phosphate + H(+). The protein operates within cell wall biogenesis; peptidoglycan biosynthesis. Cell wall formation. In Phocaeicola vulgatus (strain ATCC 8482 / DSM 1447 / JCM 5826 / CCUG 4940 / NBRC 14291 / NCTC 11154) (Bacteroides vulgatus), this protein is UDP-N-acetylmuramate--L-alanine ligase.